A 293-amino-acid polypeptide reads, in one-letter code: Putative phosphoenolpyruvate synthase regulatory protein (293 aa).

G173–T180 lines the ADP pocket.

This sequence belongs to the pyruvate, phosphate/water dikinase regulatory protein family. PSRP subfamily.

It carries out the reaction [pyruvate, water dikinase] + ADP = [pyruvate, water dikinase]-phosphate + AMP + H(+). The catalysed reaction is [pyruvate, water dikinase]-phosphate + phosphate + H(+) = [pyruvate, water dikinase] + diphosphate. Its function is as follows. Bifunctional serine/threonine kinase and phosphorylase involved in the regulation of the phosphoenolpyruvate synthase (PEPS) by catalyzing its phosphorylation/dephosphorylation. This chain is Putative phosphoenolpyruvate synthase regulatory protein, found in Photorhabdus laumondii subsp. laumondii (strain DSM 15139 / CIP 105565 / TT01) (Photorhabdus luminescens subsp. laumondii).